The sequence spans 383 residues: Histidine decarboxylase (383 aa).

His-120 lines the substrate pocket. An N6-(pyridoxal phosphate)lysine modification is found at Lys-233.

The protein belongs to the group II decarboxylase family. As to quaternary structure, homotetramer. The cofactor is pyridoxal 5'-phosphate.

It carries out the reaction L-histidine + H(+) = histamine + CO2. This chain is Histidine decarboxylase, found in Acinetobacter baumannii (strain AB307-0294).